A 160-amino-acid polypeptide reads, in one-letter code: Putative pre-16S rRNA nuclease (160 aa).

It belongs to the YqgF nuclease family.

The protein localises to the cytoplasm. In terms of biological role, could be a nuclease involved in processing of the 5'-end of pre-16S rRNA. The polypeptide is Putative pre-16S rRNA nuclease (Rhodopseudomonas palustris (strain HaA2)).